We begin with the raw amino-acid sequence, 506 residues long: GPI mannosyltransferase 3 (506 aa).

N115 carries N-linked (GlcNAc...) asparagine glycosylation. 6 helical membrane passes run A180 to W200, Y229 to A249, F257 to Y277, Y285 to M305, F330 to S350, and F358 to Q378. N395 carries N-linked (GlcNAc...) asparagine glycosylation.

Belongs to the glycosyltransferase 22 family. PIGB subfamily.

The protein resides in the endoplasmic reticulum membrane. The protein operates within glycolipid biosynthesis; glycosylphosphatidylinositol-anchor biosynthesis. Mannosyltransferase involved in glycosylphosphatidylinositol-anchor biosynthesis. Transfers the third mannose to Man2-GlcN-acyl-PI during GPI precursor assembly. This Schizosaccharomyces pombe (strain 972 / ATCC 24843) (Fission yeast) protein is GPI mannosyltransferase 3 (gpi10).